The following is a 310-amino-acid chain: Malate dehydrogenase (310 aa).

NAD(+) contacts are provided by residues 7–12 (GAGNVG) and Asp32. Positions 81 and 87 each coordinate substrate. NAD(+) contacts are provided by residues Asn94 and 117–119 (VSN). The substrate site is built by Asn119 and Arg150. The active-site Proton acceptor is His174.

This sequence belongs to the LDH/MDH superfamily. MDH type 3 family.

The enzyme catalyses (S)-malate + NAD(+) = oxaloacetate + NADH + H(+). Catalyzes the reversible oxidation of malate to oxaloacetate. This chain is Malate dehydrogenase, found in Chlorobium chlorochromatii (strain CaD3).